The following is a 502-amino-acid chain: MDGGGEHSEALKNYYLGKILGVGTFAKVIIAEHKHTRHKVAIKVLNRRQMRAPEMEEKAKREIKILRLFIDLIHPHIIRVYEVIVTPKDIFVVMEYCQNGDLLDYILEKRRLQEDEARRTFQQIISAVEYCHRNKVVHRDLKPENLLLDSKYNVKLADFGLSNVMHDGHFLKTSCGSLNYAAPEVISGKLYAGPEIDVWSCGVILYALLCGAVPFDDDNIPNLFKKIKGGTYILPIYLSDLVRDLISRMLIVDPMKRITIGEIRKHSWFQNRLPRYLAVPPPDMMQQAKMIDEDTLRDVVKLGYDKDHVCESLCNRLQNEETVAYYLLLDNRFRATSGYLGAHYQQPMESASPSTRSYLPGSNDSQGSGLRPYYRVERKWALGLQQSRAPPRAIMIEVLKALKELNVCWKKNGDCYNMKCRWCPGFPRVSDMLLDANHSFVDDCAIKDNGDANSRLPAVIKFEIQLYKTKDDKYLLDMQRVTGPQLLFLEFCAAFLTNLRVL.

The Protein kinase domain maps to 14–269 (YYLGKILGVG…IGEIRKHSWF (256 aa)). Residues 20 to 28 (LGVGTFAKV) and Lys-43 contribute to the ATP site. Residue Asp-140 is the Proton acceptor of the active site. A Phosphothreonine; by autocatalysis modification is found at Thr-173. The 41-residue stretch at 290 to 330 (MIDEDTLRDVVKLGYDKDHVCESLCNRLQNEETVAYYLLLD) folds into the UBA domain. The KA1 domain occupies 453–501 (NSRLPAVIKFEIQLYKTKDDKYLLDMQRVTGPQLLFLEFCAAFLTNLRV).

The protein belongs to the protein kinase superfamily. CAMK Ser/Thr protein kinase family. SNF1 subfamily.

It catalyses the reaction L-seryl-[protein] + ATP = O-phospho-L-seryl-[protein] + ADP + H(+). The enzyme catalyses L-threonyl-[protein] + ATP = O-phospho-L-threonyl-[protein] + ADP + H(+). In terms of biological role, essential for release from glucose repression. In Secale cereale (Rye), this protein is Carbon catabolite-derepressing protein kinase (RKIN1).